The sequence spans 313 residues: HPr kinase/phosphorylase (313 aa).

Catalysis depends on residues H136 and K157. 151 to 158 contributes to the ATP binding site; that stretch reads GDSGIGKS. Residue S158 coordinates Mg(2+). The active-site Proton acceptor; for phosphorylation activity. Proton donor; for dephosphorylation activity is D175. Residues 199–208 are important for the catalytic mechanism of both phosphorylation and dephosphorylation; sequence LEIRGLGIIN. E200 is a Mg(2+) binding site. The active site involves R241. The interval 262–267 is important for the catalytic mechanism of dephosphorylation; that stretch reads PVRPGR.

This sequence belongs to the HPrK/P family. As to quaternary structure, homohexamer. The cofactor is Mg(2+).

It carries out the reaction [HPr protein]-L-serine + ATP = [HPr protein]-O-phospho-L-serine + ADP + H(+). It catalyses the reaction [HPr protein]-O-phospho-L-serine + phosphate + H(+) = [HPr protein]-L-serine + diphosphate. Catalyzes the ATP- as well as the pyrophosphate-dependent phosphorylation of a specific serine residue in HPr, a phosphocarrier protein of the phosphoenolpyruvate-dependent sugar phosphotransferase system (PTS). HprK/P also catalyzes the pyrophosphate-producing, inorganic phosphate-dependent dephosphorylation (phosphorolysis) of seryl-phosphorylated HPr (P-Ser-HPr). The two antagonistic activities of HprK/P are regulated by several intracellular metabolites, which change their concentration in response to the absence or presence of rapidly metabolisable carbon sources (glucose, fructose, etc.) in the growth medium. Therefore, by controlling the phosphorylation state of HPr, HPrK/P is a sensor enzyme that plays a major role in the regulation of carbon metabolism and sugar transport: it mediates carbon catabolite repression (CCR), and regulates PTS-catalyzed carbohydrate uptake and inducer exclusion. The protein is HPr kinase/phosphorylase of Staphylococcus saprophyticus subsp. saprophyticus (strain ATCC 15305 / DSM 20229 / NCIMB 8711 / NCTC 7292 / S-41).